We begin with the raw amino-acid sequence, 217 residues long: MNILVADDEEMIREGIAAFLTEEGYHVIMAKDGQEVLEKFQDLPIHLMVLDLMMPRKSGFEVLKEINQKHDIPVIVLSALGDETTQSQVFDLYADDHVTKPFSLVLLVKRIKALIRRYYVIEDIWRYQDVTVDFTSYKAHYKNEEIDLKPKELLVLKCLIQHKNQVLSREQILEEISKDVADLPCDRVVDVYIRTLRKKLALDCIVTVKNVGYKISL.

The 114-residue stretch at 2–115 (NILVADDEEM…LLVKRIKALI (114 aa)) folds into the Response regulatory domain. The residue at position 51 (Asp-51) is a 4-aspartylphosphate. The segment at residues 122–217 (EDIWRYQDVT…VKNVGYKISL (96 aa)) is a DNA-binding region (ompR/PhoB-type).

Post-translationally, phosphorylated at threonine residues by StkP; threonine phosphorylation enhances RR06 binding to DNA and may also increase expression of CbpA. May be de-phosphorylated by PhpP.

Its function is as follows. Member of the two-component regulatory system HK06/RR06 involved in regulation of target genes, including choline-binding protein CbpA. Binds to the promoter region of CbpA and directly activates transcription. The protein is Response regulator RR06 of Streptococcus pneumoniae serotype 2 (strain D39 / NCTC 7466).